The following is a 665-amino-acid chain: Methionine--tRNA ligase (665 aa).

Residues 16–26 (YYPSGKAHIGH) carry the 'HIGH' region motif. The 'KMSKS' region signature appears at 311 to 315 (KMSKS). An ATP-binding site is contributed by Lys314. In terms of domain architecture, tRNA-binding spans 564-665 (DFDKIDLRVA…SALPNGAKVK (102 aa)).

The protein belongs to the class-I aminoacyl-tRNA synthetase family. MetG type 2B subfamily. Homodimer.

The protein localises to the cytoplasm. It carries out the reaction tRNA(Met) + L-methionine + ATP = L-methionyl-tRNA(Met) + AMP + diphosphate. Is required not only for elongation of protein synthesis but also for the initiation of all mRNA translation through initiator tRNA(fMet) aminoacylation. This is Methionine--tRNA ligase from Listeria monocytogenes serotype 4b (strain F2365).